A 353-amino-acid chain; its full sequence is Photosystem II protein D1 (353 aa).

At T2 the chain carries N-acetylthreonine. T2 bears the Phosphothreonine mark. The next 3 membrane-spanning stretches (helical) occupy residues 29 to 46 (YIGW…TATS), 118 to 133 (HFLL…EWEL), and 142 to 156 (WIAV…AATA). H118 is a binding site for chlorophyll a. Y126 provides a ligand contact to pheophytin a. 2 residues coordinate [CaMn4O5] cluster: D170 and E189. Residues 197 to 218 (FHMLGVAGVFGGSLFSAMHGSL) form a helical membrane-spanning segment. H198 provides a ligand contact to chlorophyll a. A quinone is bound by residues H215 and 264–265 (SF). H215 serves as a coordination point for Fe cation. H272 contacts Fe cation. A helical membrane pass occupies residues 274–288 (FLAAWPVVGIWFTAL). Residues H332, E333, D342, and A344 each contribute to the [CaMn4O5] cluster site. The propeptide occupies 345-353 (VVEAPSTNG).

It belongs to the reaction center PufL/M/PsbA/D family. PSII is composed of 1 copy each of membrane proteins PsbA, PsbB, PsbC, PsbD, PsbE, PsbF, PsbH, PsbI, PsbJ, PsbK, PsbL, PsbM, PsbT, PsbX, PsbY, PsbZ, Psb30/Ycf12, at least 3 peripheral proteins of the oxygen-evolving complex and a large number of cofactors. It forms dimeric complexes. Requires The D1/D2 heterodimer binds P680, chlorophylls that are the primary electron donor of PSII, and subsequent electron acceptors. It shares a non-heme iron and each subunit binds pheophytin, quinone, additional chlorophylls, carotenoids and lipids. D1 provides most of the ligands for the Mn4-Ca-O5 cluster of the oxygen-evolving complex (OEC). There is also a Cl(-1) ion associated with D1 and D2, which is required for oxygen evolution. The PSII complex binds additional chlorophylls, carotenoids and specific lipids. as cofactor. Post-translationally, tyr-161 forms a radical intermediate that is referred to as redox-active TyrZ, YZ or Y-Z. In terms of processing, C-terminally processed by CTPA; processing is essential to allow assembly of the oxygen-evolving complex and thus photosynthetic growth.

The protein resides in the plastid. It localises to the chloroplast thylakoid membrane. The catalysed reaction is 2 a plastoquinone + 4 hnu + 2 H2O = 2 a plastoquinol + O2. In terms of biological role, photosystem II (PSII) is a light-driven water:plastoquinone oxidoreductase that uses light energy to abstract electrons from H(2)O, generating O(2) and a proton gradient subsequently used for ATP formation. It consists of a core antenna complex that captures photons, and an electron transfer chain that converts photonic excitation into a charge separation. The D1/D2 (PsbA/PsbD) reaction center heterodimer binds P680, the primary electron donor of PSII as well as several subsequent electron acceptors. In Aethionema grandiflorum (Persian stone-cress), this protein is Photosystem II protein D1.